A 261-amino-acid chain; its full sequence is Cytochrome c oxidase subunit 3 (261 aa).

Over 1–15 (MAHQAHAYHMVDPSP) the chain is Mitochondrial matrix. The chain crosses the membrane as a helical span at residues 16-34 (WPLTGAVAALLMTSGLAVW). At 35-40 (FHFHSM) the chain is on the mitochondrial intermembrane side. A helical transmembrane segment spans residues 41 to 66 (YLLYLGLTLLLLTMVQWWRDIIREGT). The Mitochondrial matrix portion of the chain corresponds to 67 to 72 (FQGHHT). The chain crosses the membrane as a helical span at residues 73 to 105 (PPVQKGLRYGMILFITSEVFFFLGFFWAFYHSS). The Mitochondrial intermembrane segment spans residues 106–128 (LAPTPELGGCWPPTGIYPLDPFE). Residues 129–152 (VPLLNTAVLLASGVTVTWAHHSLM) traverse the membrane as a helical segment. Topologically, residues 153–155 (EGN) are mitochondrial matrix. A helical membrane pass occupies residues 156 to 183 (RKEAIQALTLTVLLGFYFTALQAMEYYE). Residues 184 to 190 (APFTIAD) are Mitochondrial intermembrane-facing. A helical membrane pass occupies residues 191–223 (GVYGSTFFVATGFHGLHVIIGSTFLMVCLLRQI). At 224-232 (QYHFTSEHH) the chain is on the mitochondrial matrix side. Residues 233–256 (FGFERAAWYWHFVDVVWLFLYVSI) traverse the membrane as a helical segment. The Mitochondrial intermembrane portion of the chain corresponds to 257-261 (YWWGS).

This sequence belongs to the cytochrome c oxidase subunit 3 family. Component of the cytochrome c oxidase (complex IV, CIV), a multisubunit enzyme composed of 14 subunits. The complex is composed of a catalytic core of 3 subunits MT-CO1, MT-CO2 and MT-CO3, encoded in the mitochondrial DNA, and 11 supernumerary subunits COX4I, COX5A, COX5B, COX6A, COX6B, COX6C, COX7A, COX7B, COX7C, COX8 and NDUFA4, which are encoded in the nuclear genome. The complex exists as a monomer or a dimer and forms supercomplexes (SCs) in the inner mitochondrial membrane with NADH-ubiquinone oxidoreductase (complex I, CI) and ubiquinol-cytochrome c oxidoreductase (cytochrome b-c1 complex, complex III, CIII), resulting in different assemblies (supercomplex SCI(1)III(2)IV(1) and megacomplex MCI(2)III(2)IV(2)).

It is found in the mitochondrion inner membrane. The enzyme catalyses 4 Fe(II)-[cytochrome c] + O2 + 8 H(+)(in) = 4 Fe(III)-[cytochrome c] + 2 H2O + 4 H(+)(out). Component of the cytochrome c oxidase, the last enzyme in the mitochondrial electron transport chain which drives oxidative phosphorylation. The respiratory chain contains 3 multisubunit complexes succinate dehydrogenase (complex II, CII), ubiquinol-cytochrome c oxidoreductase (cytochrome b-c1 complex, complex III, CIII) and cytochrome c oxidase (complex IV, CIV), that cooperate to transfer electrons derived from NADH and succinate to molecular oxygen, creating an electrochemical gradient over the inner membrane that drives transmembrane transport and the ATP synthase. Cytochrome c oxidase is the component of the respiratory chain that catalyzes the reduction of oxygen to water. Electrons originating from reduced cytochrome c in the intermembrane space (IMS) are transferred via the dinuclear copper A center (CU(A)) of subunit 2 and heme A of subunit 1 to the active site in subunit 1, a binuclear center (BNC) formed by heme A3 and copper B (CU(B)). The BNC reduces molecular oxygen to 2 water molecules using 4 electrons from cytochrome c in the IMS and 4 protons from the mitochondrial matrix. The sequence is that of Cytochrome c oxidase subunit 3 (MT-CO3) from Squalus acanthias (Spiny dogfish).